We begin with the raw amino-acid sequence, 411 residues long: Fructose-1,6-bisphosphatase, chloroplastic (411 aa).

The N-terminal 53 residues, 1–53 (MAATAGATPSSHLLLSSSRHVAASPQPRILFPSLSGKRVAVGKNHHATGVRCM), are a transit peptide targeting the chloroplast. Mg(2+) contacts are provided by Glu133, Glu162, Asp183, Leu185, and Asp186. 186–189 (DGSS) provides a ligand contact to substrate. Cys227 and Cys232 are disulfide-bonded. Residues Asn291, Tyr323, Tyr341, Tyr343, and Lys353 each coordinate substrate. Mg(2+) is bound at residue Glu359.

The protein belongs to the FBPase class 1 family. As to quaternary structure, homotetramer. It depends on Mg(2+) as a cofactor.

It is found in the plastid. It localises to the chloroplast stroma. It carries out the reaction beta-D-fructose 1,6-bisphosphate + H2O = beta-D-fructose 6-phosphate + phosphate. It functions in the pathway carbohydrate biosynthesis; Calvin cycle. The protein is Fructose-1,6-bisphosphatase, chloroplastic (FBP) of Brassica napus (Rape).